The chain runs to 240 residues: tRNA (guanine-N(1)-)-methyltransferase (240 aa).

Residues Gly111 and 130–135 (IGDYVI) each bind S-adenosyl-L-methionine.

It belongs to the RNA methyltransferase TrmD family. As to quaternary structure, homodimer.

It is found in the cytoplasm. It carries out the reaction guanosine(37) in tRNA + S-adenosyl-L-methionine = N(1)-methylguanosine(37) in tRNA + S-adenosyl-L-homocysteine + H(+). In terms of biological role, specifically methylates guanosine-37 in various tRNAs. The polypeptide is tRNA (guanine-N(1)-)-methyltransferase (Mycoplasma mycoides subsp. mycoides SC (strain CCUG 32753 / NCTC 10114 / PG1)).